We begin with the raw amino-acid sequence, 206 residues long: Small ribosomal subunit protein uS4 (206 aa).

Residues 96–157 (GRLDNVVYRM…KAKKQSRVRA (62 aa)) form the S4 RNA-binding domain.

This sequence belongs to the universal ribosomal protein uS4 family. In terms of assembly, part of the 30S ribosomal subunit. Contacts protein S5. The interaction surface between S4 and S5 is involved in control of translational fidelity.

One of the primary rRNA binding proteins, it binds directly to 16S rRNA where it nucleates assembly of the body of the 30S subunit. Its function is as follows. With S5 and S12 plays an important role in translational accuracy. This Sodalis glossinidius (strain morsitans) protein is Small ribosomal subunit protein uS4.